The following is a 459-amino-acid chain: Chromosomal replication initiator protein DnaA (459 aa).

A domain I, interacts with DnaA modulators region spans residues 1–74 (MMEMPIDNLW…ANVVQSILGH (74 aa)). Positions 74–117 (HPVEIYITVAKGEEFEEIGGGGEWELPTTNIINETPNQNRQPNT) are domain II. Residues 118–334 (ELNAKYVFSR…GALTRALAYI (217 aa)) form a domain III, AAA+ region region. Positions 162, 164, 165, and 166 each coordinate ATP. The interval 335-459 (SIWGLPMTVA…IKMNSRSRKP (125 aa)) is domain IV, binds dsDNA.

Belongs to the DnaA family. As to quaternary structure, oligomerizes as a right-handed, spiral filament on DNA at oriC.

It localises to the cytoplasm. Plays an essential role in the initiation and regulation of chromosomal replication. ATP-DnaA binds to the origin of replication (oriC) to initiate formation of the DNA replication initiation complex once per cell cycle. Binds the DnaA box (a 9 base pair repeat at the origin) and separates the double-stranded (ds)DNA. Forms a right-handed helical filament on oriC DNA; dsDNA binds to the exterior of the filament while single-stranded (ss)DNA is stabiized in the filament's interior. The ATP-DnaA-oriC complex binds and stabilizes one strand of the AT-rich DNA unwinding element (DUE), permitting loading of DNA polymerase. After initiation quickly degrades to an ADP-DnaA complex that is not apt for DNA replication. Binds acidic phospholipids. This chain is Chromosomal replication initiator protein DnaA, found in Nostoc sp. (strain PCC 7120 / SAG 25.82 / UTEX 2576).